The following is a 397-amino-acid chain: Digeranylgeranylglycerophospholipid reductase 3 (397 aa).

Ala16, Asp35, Cys46, Ala47, Gly49, Arg102, Ala126, Asp283, Gly295, and Ile296 together coordinate FAD. Residue Lys338 coordinates a 2,3-bis-O-(geranylgeranyl)-sn-glycerol 1-phospholipid.

It belongs to the geranylgeranyl reductase family. DGGGPL reductase subfamily. Requires FAD as cofactor.

The enzyme catalyses a 2,3-bis-O-phytanyl-sn-glycerol 1-phospholipid + 8 A = a 2,3-bis-O-(geranylgeranyl)-sn-glycerol 1-phospholipid + 8 AH2. It carries out the reaction 2,3-bis-O-(phytanyl)-sn-glycerol 1-phosphate + 8 A = 2,3-bis-O-(geranylgeranyl)-sn-glycerol 1-phosphate + 8 AH2. It catalyses the reaction CDP-2,3-bis-O-(geranylgeranyl)-sn-glycerol + 8 AH2 = CDP-2,3-bis-O-(phytanyl)-sn-glycerol + 8 A. The catalysed reaction is archaetidylserine + 8 AH2 = 2,3-bis-O-phytanyl-sn-glycero-3-phospho-L-serine + 8 A. It functions in the pathway membrane lipid metabolism; glycerophospholipid metabolism. Is involved in the reduction of 2,3-digeranylgeranylglycerophospholipids (unsaturated archaeols) into 2,3-diphytanylglycerophospholipids (saturated archaeols) in the biosynthesis of archaeal membrane lipids. Catalyzes the formation of archaetidic acid (2,3-di-O-phytanyl-sn-glyceryl phosphate) from 2,3-di-O-geranylgeranylglyceryl phosphate (DGGGP) via the hydrogenation of each double bond of the isoprenoid chains. Is also probably able to reduce double bonds of geranyl groups in CDP-2,3-bis-O-(geranylgeranyl)-sn-glycerol and archaetidylserine, thus acting at various stages in the biosynthesis of archaeal membrane lipids. The sequence is that of Digeranylgeranylglycerophospholipid reductase 3 from Methanosphaera stadtmanae (strain ATCC 43021 / DSM 3091 / JCM 11832 / MCB-3).